A 252-amino-acid polypeptide reads, in one-letter code: MKRSMRSHLAKQTRSVIFTGYPVIGSQDRIMSSGACLDSHQNGLITSCPWDPRIKGEFFYQTALSVPLTHVKDFINDIKALVKIEPKSLCGLELNYGVLVRYVTSSPAYLRKEEKALDFDLTYYRSKDDPWTPRLYEDYMEEIEQMAILKYNALPHWGKNRNLAFDGAIKKYKNANTFLKVKERLDPWGLFSTEWTDQILGLKGNVTIVKQGCAPEGLCICSDDSHCAPNKGYMCRPGKVYKEARVCTLVTA.

A mitochondrion-targeting transit peptide spans 1–102 (MKRSMRSHLA…ELNYGVLVRY (102 aa)).

Belongs to the oxygen-dependent FAD-linked oxidoreductase family.

The protein resides in the mitochondrion. The enzyme catalyses L-gulono-1,4-lactone + O2 = L-ascorbate + H2O2 + H(+). It participates in cofactor biosynthesis; L-ascorbate biosynthesis. Its function is as follows. May be involved in the biosynthesis of ascorbic acid. This Arabidopsis thaliana (Mouse-ear cress) protein is Probable truncated L-gulonolactone oxidase 7, mitochondrial.